The primary structure comprises 465 residues: Sodium-dependent phosphate transport protein 1 (465 aa).

N-linked (GlcNAc...) asparagine glycosylation is found at N39, N47, and N56. Transmembrane regions (helical) follow at residues 79 to 99 (GLVLSSVFLGMVVIQVPVGYL), 117 to 137 (SVLSLLIPPAAQVGAALVIVC), 176 to 196 (FVMGPFIALLVSGFICDLLGW), 199 to 219 (VFYIFGIVGCVLSLFWFILLF), 260 to 280 (LPLWAIILNSFAFIWSNNLLV), 299 to 319 (GLLSSLPYLLAYICGIVAGQM), 337 to 357 (LFTTLGIFCPVIFVVCLLYLS), 363 to 383 (TVIFLTLANSTLSFSFCGQLI), 399 to 419 (VTALIGIFGGLISSTLAGLIL), and 431 to 451 (FFLMAGINVTCLAFYLLFAKG).

Belongs to the major facilitator superfamily. Sodium/anion cotransporter family. In terms of assembly, interacts with PDZK1.

The protein localises to the apical cell membrane. It carries out the reaction 3 Na(+)(out) + phosphate(out) = 3 Na(+)(in) + phosphate(in). The catalysed reaction is urate(out) = urate(in). Functionally, important for the resorption of phosphate by the kidney. May be involved in actively transporting phosphate into cells via Na(+) cotransport in the renal brush border membrane. Plays a role in urate transport in the kidney. The polypeptide is Sodium-dependent phosphate transport protein 1 (Slc17a1) (Rattus norvegicus (Rat)).